Consider the following 133-residue polypeptide: MRHGHGLRKLNRTSEHRLAMLRNMMNSLLQHEAIKTTLPKAKELRRVVEPMITLAKTPTLANKRLAFDRLRDRDMVVKLFAELGPRYQTRPGGYTRILKMGFRVGDNAPMALVELVDRPDVSEEIKDDAAAAK.

The protein belongs to the bacterial ribosomal protein bL17 family. Part of the 50S ribosomal subunit. Contacts protein L32.

The chain is Large ribosomal subunit protein bL17 from Polaromonas naphthalenivorans (strain CJ2).